Consider the following 69-residue polypeptide: Pleurain-A1 (69 aa).

The signal sequence occupies residues 1 to 18 (MFTLKKTLLLLFFLGTIS). Residues 19–43 (ISLCKQERDADEDDGRKMTEEEVKR) constitute a propeptide that is removed on maturation. C63 and C69 form a disulfide bridge.

As to expression, expressed by the skin glands.

Its subcellular location is the secreted. Its function is as follows. Antimicrobial peptide. Has activity against the Gram-positive bacterium S.aureus ATCC2592 (MIC=15 ug/ml), the Gram-negative bacteria E.coli ATCC25922 (MIC=60 ug/ml), B.dysenteriae (MIC=120 ug/ml), H.pylori NTCT11637 (MIC=30 ug/ml), and the fungus C.albicans ATCC2002 (MIC=30 ug/ml). Has little hemolytic activity on rabbit red blood cells. The sequence is that of Pleurain-A1 from Nidirana pleuraden (Yunnan pond frog).